The following is a 541-amino-acid chain: 3-oxoacyl-[acyl-carrier-protein] synthase II, chloroplastic (541 aa).

The transit peptide at 1–103 (MVGASSSYAS…NRNQRRLNRA (103 aa)) directs the protein to the chloroplast. A Ketosynthase family 3 (KS3) domain is found at 129–539 (QRRVVVTGMG…GHNSSIIFAP (411 aa)). Residues C292, H432, and H468 each act as for beta-ketoacyl synthase activity in the active site.

The protein belongs to the thiolase-like superfamily. Beta-ketoacyl-ACP synthases family. Homodimer. Mostly expressed in siliques, and, to a lower extent, in leaves, stems, flower buds, and flowers.

The protein localises to the plastid. It localises to the chloroplast stroma. The enzyme catalyses a fatty acyl-[ACP] + malonyl-[ACP] + H(+) = a 3-oxoacyl-[ACP] + holo-[ACP] + CO2. Essential protein that catalyzes the condensation reaction of fatty acid synthesis by the addition to an acyl acceptor of two carbons from malonyl-ACP. Specific for elongation from C-16 and C-16 to unsaturated C-18 fatty acids. Confers resistance to low temperatures by maintaining chloroplast membranes integrity. Involved in the regulation of fatty acids ratios during seed metabolism. Required for embryo development, especially at the transition from the globular to the heart stage. This Arabidopsis thaliana (Mouse-ear cress) protein is 3-oxoacyl-[acyl-carrier-protein] synthase II, chloroplastic (KAS2).